The primary structure comprises 156 residues: MSEKEQKEVEAKESSGKAEERRETREKQVRGDVGIAWIYASYNNTIIHITDLSGAETIAFASGGMVAKADRDKPSPWAAMQAAARAAKIALDKGIRVVHVKIKAPGGYGPKTPGPGAGPAIRALVRAGLMVDRIEDVTPLPTDSIRKPGGRRGRRV.

Positions 1–27 (MSEKEQKEVEAKESSGKAEERRETREK) are disordered.

The protein belongs to the universal ribosomal protein uS11 family. As to quaternary structure, part of the 30S ribosomal subunit.

Its function is as follows. Located on the platform of the 30S subunit. The sequence is that of Small ribosomal subunit protein uS11 from Thermofilum pendens (strain DSM 2475 / Hrk 5).